A 142-amino-acid chain; its full sequence is Large ribosomal subunit protein uL11 (142 aa).

Belongs to the universal ribosomal protein uL11 family. As to quaternary structure, part of the ribosomal stalk of the 50S ribosomal subunit. Interacts with L10 and the large rRNA to form the base of the stalk. L10 forms an elongated spine to which L12 dimers bind in a sequential fashion forming a multimeric L10(L12)X complex. In terms of processing, one or more lysine residues are methylated.

Forms part of the ribosomal stalk which helps the ribosome interact with GTP-bound translation factors. This Rhodospirillum rubrum (strain ATCC 11170 / ATH 1.1.1 / DSM 467 / LMG 4362 / NCIMB 8255 / S1) protein is Large ribosomal subunit protein uL11.